A 390-amino-acid chain; its full sequence is MADRHTGTHGHVPVMLERMVELIAPTVTESSENSAPSVILDGTLGAGGHTESFLERFPSAMVIGVDRDKKELSRTTERLSRFQDRFYPVHARFDNFDEALDDADHPVVDAFDAHGLSAGFFDLGVSSMQLDQVDRGFTYRDDGPLDMRMDTSTGKTAADVLNTYSHGELARILKTYGDERFAGPLARAIVREREKEPWSTSQRLVDLIYATIPASARRHGGHPAKRTFQALRVEVNAELDALRRVIPKVCSYLHLGGRAVFMSYQSLEDKIVKRELAALTESKTPPGLPIDLPNSAPDFHLVTRGSEKADEQENNKNPRAHSVRVRAVERTGYSHSSPPPGSTPARASGSSTTYSARSGSRHEAHREGREHLVSSAQQSISHREDVEGEQ.

S-adenosyl-L-methionine-binding positions include 47–49, aspartate 66, phenylalanine 93, aspartate 122, and glutamine 129; that span reads GGH. The disordered stretch occupies residues 282–390; the sequence is SKTPPGLPID…SHREDVEGEQ (109 aa). Basic and acidic residues predominate over residues 305 to 316; sequence GSEKADEQENNK. A compositionally biased stretch (polar residues) spans 348–358; it reads SGSSTTYSARS. Composition is skewed to basic and acidic residues over residues 360-372 and 381-390; these read SRHEAHREGREHL and SHREDVEGEQ.

Belongs to the methyltransferase superfamily. RsmH family.

It localises to the cytoplasm. The catalysed reaction is cytidine(1402) in 16S rRNA + S-adenosyl-L-methionine = N(4)-methylcytidine(1402) in 16S rRNA + S-adenosyl-L-homocysteine + H(+). Functionally, specifically methylates the N4 position of cytidine in position 1402 (C1402) of 16S rRNA. The sequence is that of Ribosomal RNA small subunit methyltransferase H from Corynebacterium kroppenstedtii (strain DSM 44385 / JCM 11950 / CIP 105744 / CCUG 35717).